The primary structure comprises 505 residues: L-carnitine/gamma-butyrobetaine antiporter (505 aa).

Transmembrane regions (helical) follow at residues Ile-10–Val-30, Ile-50–Val-70, Ile-92–Ile-112, Gly-143–Val-163, Phe-195–Val-215, Leu-231–Leu-251, Ser-263–Met-283, Trp-316–Ala-336, Leu-347–Gly-367, Leu-403–Ile-423, Leu-446–Leu-466, and Ala-475–Ile-495.

Belongs to the BCCT transporter (TC 2.A.15) family. CaiT subfamily. In terms of assembly, homotrimer.

Its subcellular location is the cell inner membrane. The catalysed reaction is 4-(trimethylamino)butanoate(in) + (R)-carnitine(out) = 4-(trimethylamino)butanoate(out) + (R)-carnitine(in). It functions in the pathway amine and polyamine metabolism; carnitine metabolism. Catalyzes the exchange of L-carnitine for gamma-butyrobetaine. The protein is L-carnitine/gamma-butyrobetaine antiporter of Salmonella arizonae (strain ATCC BAA-731 / CDC346-86 / RSK2980).